Consider the following 366-residue polypeptide: Chorismate synthase (366 aa).

NADP(+)-binding residues include R48 and R54. FMN contacts are provided by residues 125-127 (RSS), 238-239 (NA), G278, 293-297 (KPTSS), and R319.

The protein belongs to the chorismate synthase family. In terms of assembly, homotetramer. It depends on FMNH2 as a cofactor.

The catalysed reaction is 5-O-(1-carboxyvinyl)-3-phosphoshikimate = chorismate + phosphate. Its pathway is metabolic intermediate biosynthesis; chorismate biosynthesis; chorismate from D-erythrose 4-phosphate and phosphoenolpyruvate: step 7/7. Its function is as follows. Catalyzes the anti-1,4-elimination of the C-3 phosphate and the C-6 proR hydrogen from 5-enolpyruvylshikimate-3-phosphate (EPSP) to yield chorismate, which is the branch point compound that serves as the starting substrate for the three terminal pathways of aromatic amino acid biosynthesis. This reaction introduces a second double bond into the aromatic ring system. This Neisseria meningitidis serogroup B (strain ATCC BAA-335 / MC58) protein is Chorismate synthase.